The sequence spans 552 residues: Ribulokinase (552 aa).

Belongs to the ribulokinase family.

The enzyme catalyses D-ribulose + ATP = D-ribulose 5-phosphate + ADP + H(+). The catalysed reaction is L-ribulose + ATP = L-ribulose 5-phosphate + ADP + H(+). It participates in carbohydrate degradation; L-arabinose degradation via L-ribulose; D-xylulose 5-phosphate from L-arabinose (bacterial route): step 2/3. This chain is Ribulokinase, found in Bacillus licheniformis (strain ATCC 14580 / DSM 13 / JCM 2505 / CCUG 7422 / NBRC 12200 / NCIMB 9375 / NCTC 10341 / NRRL NRS-1264 / Gibson 46).